The following is a 130-amino-acid chain: Glycoprotein hormone beta-5 (130 aa).

Positions Met-1 to Gly-24 are cleaved as a signal peptide. 5 cysteine pairs are disulfide-bonded: Cys-36–Cys-84, Cys-50–Cys-99, Cys-60–Cys-115, Cys-64–Cys-117, and Cys-120–Cys-127. Asn-87 is a glycosylation site (N-linked (GlcNAc...) asparagine).

The protein belongs to the glycoprotein hormones subunit beta family. As to quaternary structure, heterodimer with GPHA2; this heterodimer interacts with thyroid-stimulating hormone receptor (TSHR), and hence stimulates cAMP production. Post-translationally, N-glycosylated. In terms of tissue distribution, highly expressed in brain and at low levels in pituitary. Also found in retina, testis and skin but not in pancreas, parotid, kidney, stomach, liver, colon, small intestine, thyroid, brain or adrenal gland. In pituitary, colocalizes with ACTH, suggesting that it is located in corticotrophs.

The protein resides in the secreted. Functionally, functions as a heterodimeric glycoprotein hormone with GPHA2 able to bind and activate the thyroid-stimulating hormone receptor (TSHR), leading to increased cAMP production. Plays a central role in controlling thyroid cell metabolism. The protein is Glycoprotein hormone beta-5 (GPHB5) of Homo sapiens (Human).